Here is a 525-residue protein sequence, read N- to C-terminus: Bifunctional enzyme NanE/NanK (525 aa).

The segment at 1–241 (MRGSPRNLCR…DAVESAAKPS (241 aa)) is manNAc-6-P epimerase. The tract at residues 242–525 (SPVLAFDIGG…VADLAATYFS (284 aa)) is manNAc kinase. Residues 246–253 (AFDIGGTK) and 372–379 (GIGGGIVL) each bind ATP.

This sequence in the N-terminal section; belongs to the NanE family. The protein in the C-terminal section; belongs to the ROK (NagC/XylR) family. NanK subfamily.

It carries out the reaction an N-acyl-D-glucosamine 6-phosphate = an N-acyl-D-mannosamine 6-phosphate. It catalyses the reaction an N-acyl-D-mannosamine + ATP = an N-acyl-D-mannosamine 6-phosphate + ADP + H(+). The protein operates within amino-sugar metabolism; N-acetylneuraminate degradation; D-fructose 6-phosphate from N-acetylneuraminate: step 2/5. It functions in the pathway amino-sugar metabolism; N-acetylneuraminate degradation; D-fructose 6-phosphate from N-acetylneuraminate: step 3/5. In terms of biological role, converts N-acetylmannosamine-6-phosphate (ManNAc-6-P) to N-acetylglucosamine-6-phosphate (GlcNAc-6-P). Catalyzes the phosphorylation of N-acetylmannosamine (ManNAc) to ManNAc-6-P. This chain is Bifunctional enzyme NanE/NanK (nanEK), found in Brucella suis biovar 1 (strain 1330).